The primary structure comprises 284 residues: Phosphatidylglycerol--prolipoprotein diacylglyceryl transferase (284 aa).

A run of 7 helical transmembrane segments spans residues 14 to 34 (IAFS…ACAI), 62 to 82 (YFLW…ILIY), 106 to 126 (FVGI…IASY), 136 to 156 (LLIY…FGRI), 190 to 210 (PSQL…VLWA), 218 to 238 (GLLI…AEFY), and 252 to 272 (LSMG…ILLY). A 1,2-diacyl-sn-glycero-3-phospho-(1'-sn-glycerol) is bound at residue arginine 155.

Belongs to the Lgt family.

The protein resides in the cell inner membrane. It catalyses the reaction L-cysteinyl-[prolipoprotein] + a 1,2-diacyl-sn-glycero-3-phospho-(1'-sn-glycerol) = an S-1,2-diacyl-sn-glyceryl-L-cysteinyl-[prolipoprotein] + sn-glycerol 1-phosphate + H(+). It participates in protein modification; lipoprotein biosynthesis (diacylglyceryl transfer). In terms of biological role, catalyzes the transfer of the diacylglyceryl group from phosphatidylglycerol to the sulfhydryl group of the N-terminal cysteine of a prolipoprotein, the first step in the formation of mature lipoproteins. In Helicobacter pylori (strain Shi470), this protein is Phosphatidylglycerol--prolipoprotein diacylglyceryl transferase.